A 215-amino-acid chain; its full sequence is Ribosomal RNA small subunit methyltransferase G (215 aa).

S-adenosyl-L-methionine contacts are provided by residues Gly-73, Leu-78, 125-126, and Arg-140; that span reads AE.

The protein belongs to the methyltransferase superfamily. RNA methyltransferase RsmG family.

It is found in the cytoplasm. In terms of biological role, specifically methylates the N7 position of guanine in position 518 of 16S rRNA. This is Ribosomal RNA small subunit methyltransferase G from Renibacterium salmoninarum (strain ATCC 33209 / DSM 20767 / JCM 11484 / NBRC 15589 / NCIMB 2235).